Reading from the N-terminus, the 182-residue chain is Lipoprotein signal peptidase (182 aa).

The next 4 membrane-spanning stretches (helical) occupy residues 12–32 (FLWI…TVID), 40–60 (IQVL…AFSF), 70–90 (WFFT…LKQS), and 97–117 (LPVA…DRLV). Active-site residues include D123 and D141. The helical transmembrane segment at 136 to 156 (AFNIADSAIFIGAALLIIDMF) threads the bilayer. Positions 161-182 (KKSEENGAESKAGSANSSETIK) are disordered. The span at 173–182 (GSANSSETIK) shows a compositional bias: polar residues.

It belongs to the peptidase A8 family.

It is found in the cell inner membrane. The catalysed reaction is Release of signal peptides from bacterial membrane prolipoproteins. Hydrolyzes -Xaa-Yaa-Zaa-|-(S,diacylglyceryl)Cys-, in which Xaa is hydrophobic (preferably Leu), and Yaa (Ala or Ser) and Zaa (Gly or Ala) have small, neutral side chains.. It functions in the pathway protein modification; lipoprotein biosynthesis (signal peptide cleavage). In terms of biological role, this protein specifically catalyzes the removal of signal peptides from prolipoproteins. This is Lipoprotein signal peptidase from Alteromonas mediterranea (strain DSM 17117 / CIP 110805 / LMG 28347 / Deep ecotype).